The chain runs to 507 residues: Putative histone deacetylase 2 (507 aa).

The interval 29 to 342 (RNVAYYYHKD…WALETGVILG (314 aa)) is histone deacetylase. His-162 is an active-site residue. Positions 444–507 (EECFVEEDSK…RKDLNIPGIP (64 aa)) are disordered. The segment covering 482–501 (SHSDVIEEAKYEDRDRRKDL) has biased composition (basic and acidic residues).

The protein belongs to the histone deacetylase family. HD type 1 subfamily. As to quaternary structure, may be a component of a histone deacetylase complex containing saeg-2, saeg-1 and hda-2.

The protein localises to the nucleus. The enzyme catalyses N(6)-acetyl-L-lysyl-[histone] + H2O = L-lysyl-[histone] + acetate. Functionally, probably responsible for the deacetylation of lysine residues on the N-terminal part of the core histones (H2A, H2B, H3 and H4). Histone deacetylation gives a tag for epigenetic repression and plays an important role in transcriptional regulation, cell cycle progression and developmental events. Histone deacetylases act via the formation of large multiprotein complexes. As a likely component of a histone deacetylase complex, together with saeg-1 and hda-2, functions downstream of the cAMP-dependent kinase egl-4 to regulate the expression of genes required for egg-laying and forgaging. This is Putative histone deacetylase 2 (hda-2) from Caenorhabditis elegans.